Reading from the N-terminus, the 185-residue chain is Ribosome-recycling factor (185 aa).

It belongs to the RRF family.

The protein localises to the cytoplasm. Its function is as follows. Responsible for the release of ribosomes from messenger RNA at the termination of protein biosynthesis. May increase the efficiency of translation by recycling ribosomes from one round of translation to another. The protein is Ribosome-recycling factor of Vibrio cholerae serotype O1 (strain ATCC 39541 / Classical Ogawa 395 / O395).